A 444-amino-acid chain; its full sequence is Na(+)-translocating NADH-quinone reductase subunit A (444 aa).

The protein belongs to the NqrA family. As to quaternary structure, composed of six subunits; NqrA, NqrB, NqrC, NqrD, NqrE and NqrF.

The catalysed reaction is a ubiquinone + n Na(+)(in) + NADH + H(+) = a ubiquinol + n Na(+)(out) + NAD(+). NQR complex catalyzes the reduction of ubiquinone-1 to ubiquinol by two successive reactions, coupled with the transport of Na(+) ions from the cytoplasm to the periplasm. NqrA to NqrE are probably involved in the second step, the conversion of ubisemiquinone to ubiquinol. This chain is Na(+)-translocating NADH-quinone reductase subunit A, found in Shewanella frigidimarina (strain NCIMB 400).